We begin with the raw amino-acid sequence, 103 residues long: Small ribosomal subunit protein uS14c (103 aa).

Residues S27–N56 form a disordered region.

The protein belongs to the universal ribosomal protein uS14 family. In terms of assembly, part of the 30S ribosomal subunit.

The protein resides in the plastid. It localises to the chloroplast. Functionally, binds 16S rRNA, required for the assembly of 30S particles. The sequence is that of Small ribosomal subunit protein uS14c from Zea mays (Maize).